We begin with the raw amino-acid sequence, 396 residues long: Elongation factor Tu (396 aa).

In terms of domain architecture, tr-type G spans 10–205 (KPHVNIGTIG…AVDESIPDPV (196 aa)). Positions 19–26 (GHVDHGKT) are G1. A GTP-binding site is contributed by 19–26 (GHVDHGKT). Thr-26 provides a ligand contact to Mg(2+). The segment at 62–66 (GITIN) is G2. Residues 83-86 (DAPG) form a G3 region. GTP-binding positions include 83–87 (DAPGH) and 138–141 (NKAD). A G4 region spans residues 138-141 (NKAD). The segment at 175–177 (SAL) is G5.

It belongs to the TRAFAC class translation factor GTPase superfamily. Classic translation factor GTPase family. EF-Tu/EF-1A subfamily. Monomer.

The protein localises to the cytoplasm. It carries out the reaction GTP + H2O = GDP + phosphate + H(+). In terms of biological role, GTP hydrolase that promotes the GTP-dependent binding of aminoacyl-tRNA to the A-site of ribosomes during protein biosynthesis. In Mycobacterium sp. (strain JLS), this protein is Elongation factor Tu.